A 500-amino-acid chain; its full sequence is NAD(P)H-quinone oxidoreductase chain 4, chloroplastic (500 aa).

14 helical membrane-spanning segments follow: residues 4 to 24 (FPWLTLIVIFPISAGSFLFFL), 35 to 55 (YTLCVCSLELLLTTYTFCYHF), 87 to 107 (FGPILLTGFITTLATLAAWPV), 134 to 154 (LLLFFMMWELELIPVYLLLSM), 167 to 187 (FILYTAGSSIFLLIGVLGIGL), 208 to 228 (ALEIIFYIGFLIAFAVKSPII), 242 to 262 (HYSTCMLLAGILLKMGAYGLV), 272 to 292 (AHSIFAPYLIIVGAIQIVYAA), 305 to 325 (IAYSSVSHMGFIIIGIGSITD), 330 to 350 (GALLQIISHGFIGAALFFLAG), 364 to 384 (MGGMAVAIPKIFTMFSILSMA), 386 to 406 (LALPGMSGFVAELIVFFGIIT), 416 to 436 (ILITFVMAIGMILTPIYSLSM), and 462 to 482 (LFVSISILLPVIGMGIYPDFL).

Belongs to the complex I subunit 4 family.

It is found in the plastid. It localises to the chloroplast thylakoid membrane. It catalyses the reaction a plastoquinone + NADH + (n+1) H(+)(in) = a plastoquinol + NAD(+) + n H(+)(out). The enzyme catalyses a plastoquinone + NADPH + (n+1) H(+)(in) = a plastoquinol + NADP(+) + n H(+)(out). This Pelargonium hortorum (Common geranium) protein is NAD(P)H-quinone oxidoreductase chain 4, chloroplastic.